Reading from the N-terminus, the 212-residue chain is ATP-dependent Clp protease proteolytic subunit (212 aa).

Residue serine 114 is the Nucleophile of the active site. Residue histidine 139 is part of the active site.

This sequence belongs to the peptidase S14 family. In terms of assembly, fourteen ClpP subunits assemble into 2 heptameric rings which stack back to back to give a disk-like structure with a central cavity, resembling the structure of eukaryotic proteasomes.

The protein localises to the cytoplasm. It catalyses the reaction Hydrolysis of proteins to small peptides in the presence of ATP and magnesium. alpha-casein is the usual test substrate. In the absence of ATP, only oligopeptides shorter than five residues are hydrolyzed (such as succinyl-Leu-Tyr-|-NHMec, and Leu-Tyr-Leu-|-Tyr-Trp, in which cleavage of the -Tyr-|-Leu- and -Tyr-|-Trp bonds also occurs).. Its function is as follows. Cleaves peptides in various proteins in a process that requires ATP hydrolysis. Has a chymotrypsin-like activity. Plays a major role in the degradation of misfolded proteins. This chain is ATP-dependent Clp protease proteolytic subunit, found in Aromatoleum aromaticum (strain DSM 19018 / LMG 30748 / EbN1) (Azoarcus sp. (strain EbN1)).